Here is a 620-residue protein sequence, read N- to C-terminus: Chaperone protein HscA homolog (620 aa).

It belongs to the heat shock protein 70 family.

Its function is as follows. Chaperone involved in the maturation of iron-sulfur cluster-containing proteins. Has a low intrinsic ATPase activity which is markedly stimulated by HscB. The protein is Chaperone protein HscA homolog of Herminiimonas arsenicoxydans.